A 344-amino-acid chain; its full sequence is N-acetyl-gamma-glutamyl-phosphate reductase (344 aa).

The active site involves Cys-147.

Belongs to the NAGSA dehydrogenase family. Type 1 subfamily.

Its subcellular location is the cytoplasm. It catalyses the reaction N-acetyl-L-glutamate 5-semialdehyde + phosphate + NADP(+) = N-acetyl-L-glutamyl 5-phosphate + NADPH + H(+). It functions in the pathway amino-acid biosynthesis; L-arginine biosynthesis; N(2)-acetyl-L-ornithine from L-glutamate: step 3/4. In terms of biological role, catalyzes the NADPH-dependent reduction of N-acetyl-5-glutamyl phosphate to yield N-acetyl-L-glutamate 5-semialdehyde. The protein is N-acetyl-gamma-glutamyl-phosphate reductase of Bacillus amyloliquefaciens (Bacillus velezensis).